Here is a 347-residue protein sequence, read N- to C-terminus: HTH-type transcriptional regulator PhcA (347 aa).

An HTH lysR-type domain is found at 1-61 (MVNVDTKLLV…IRVPHGLTPT (61 aa)). The H-T-H motif DNA-binding region spans 21–40 (ATYVAEKMHMTAPAVSHSLG). A disordered region spans residues 316-347 (PMHPPMLTDDSGKSGKTGKGDAEKEDESRLSV). Residues 325–347 (DSGKSGKTGKGDAEKEDESRLSV) are compositionally biased toward basic and acidic residues.

This sequence belongs to the LysR transcriptional regulatory family.

Functionally, regulates the transcription of one or more of the genes involved in virulence. This is HTH-type transcriptional regulator PhcA (phcA) from Ralstonia nicotianae (strain ATCC BAA-1114 / GMI1000) (Ralstonia solanacearum).